The chain runs to 684 residues: Cleavage and polyadenylation specificity factor subunit 3 (684 aa).

Ser-2 carries the N-acetylserine modification. Positions 71, 73, 75, 76, 158, and 179 each coordinate Zn(2+). His-396 acts as the Proton donor in catalysis. A Zn(2+)-binding site is contributed by His-418. Residues Lys-462, Lys-465, and Lys-545 each participate in a glycyl lysine isopeptide (Lys-Gly) (interchain with G-Cter in SUMO) cross-link. Ser-659 is subject to Phosphoserine. Position 681 is a phosphothreonine (Thr-681).

This sequence belongs to the metallo-beta-lactamase superfamily. RNA-metabolizing metallo-beta-lactamase-like family. CPSF3 subfamily. As to quaternary structure, component of the cleavage and polyadenylation specificity factor (CPSF) complex, composed of CPSF1, CPSF2, CPSF3, CPSF4 and FIP1L1. Interacts with CPSF2, CSTF2 and SYMPK. Interacts with TUT1; the interaction is direct and mediates the recruitment of the CPSF complex on the 3'UTR of pre-mRNAs. Interacts with WDR33. Interacts with ZC3H3. Interacts with ISY1; this interaction is in an RNA independent manner. Interacts with the microprocessor complex subunits DGCR8 and DROSHA; this interaction is in an RNA dependent manner. Zn(2+) is required as a cofactor. Sumoylated on Lys-462, Lys-465 and Lys-545, preferentially by SUMO3.

It localises to the nucleus. Functionally, component of the cleavage and polyadenylation specificity factor (CPSF) complex that plays a key role in pre-mRNA 3'-end formation, recognizing the AAUAAA signal sequence and interacting with poly(A) polymerase and other factors to bring about cleavage and poly(A) addition. Has endonuclease activity, and functions as an mRNA 3'-end-processing endonuclease. Also involved in the histone 3'-end pre-mRNA processing. U7 snRNP-dependent protein that induces both the 3' endoribonucleolytic cleavage of histone pre-mRNAs and acts as a 5' to 3' exonuclease for degrading the subsequent downstream cleavage product (DCP) of mature histone mRNAs. Cleavage occurs after the 5'-ACCCA-3' sequence in the histone pre-mRNA leaving a 3'hydroxyl group on the upstream fragment containing the stem loop (SL) and 5' phosphate on the downstream cleavage product (DCP) starting with CU nucleotides. The U7-dependent 5' to 3' exonuclease activity is processive and degrades the DCP RNA substrate even after complete removal of the U7-binding site. Binds to the downstream cleavage product (DCP) of histone pre-mRNAs and the cleaved DCP RNA substrate in a U7 snRNP dependent manner. Required for the selective processing of microRNAs (miRNAs) during embryonic stem cell differentiation via its interaction with ISY1. Required for entering/progressing through S-phase of the cell cycle. Required for the biogenesis of all miRNAs from the pri-miR-17-92 primary transcript except miR-92a. Only required for the biogenesis of miR-290 and miR-96 from the pri-miR-290-295 and pri-miR-96-183 primary transcripts, respectively. The protein is Cleavage and polyadenylation specificity factor subunit 3 (Cpsf3) of Mus musculus (Mouse).